Here is a 117-residue protein sequence, read N- to C-terminus: Large ribosomal subunit protein uL24 (117 aa).

A compositionally biased stretch (basic residues) spans 1 to 10 (MSKQPRKQRK). Residues 1–28 (MSKQPRKQRKALYTAPLHKRHNSMSVHL) are disordered.

It belongs to the universal ribosomal protein uL24 family. In terms of assembly, part of the 50S ribosomal subunit.

One of two assembly initiator proteins, it binds directly to the 5'-end of the 23S rRNA, where it nucleates assembly of the 50S subunit. In terms of biological role, located at the polypeptide exit tunnel on the outside of the subunit. This is Large ribosomal subunit protein uL24 from Methanosphaera stadtmanae (strain ATCC 43021 / DSM 3091 / JCM 11832 / MCB-3).